The primary structure comprises 599 residues: MRSHRCGEVNESLLGQEVGLCGWVHRRRDHGGVIFVDLRDREGLVQVVFDPDHPEPFSLAETVRSEYVIRVVGQVRARPEGTENPNLKSGRVEVLATSLEILNRSETPPFPIESDIEVNEEMRLRYRYIDLRRPVMQQRMRLRRDITRFLRNFLDHHGFYEIETPFLTKATPEGARDYLVPSRTHPHSFFALPQSPQLYKQLLMISGMDRYYQVVRCFRDEDLRADRQPEFTQLDIETSFMNEDQIMTLMEAMIRDLFRETLNEELPDPFPRMTYAEAMRRYASDKPDLRIPLELVDIADLMAGVEFKVFAGPAADPEGRVVALKLPGGGDLSRKDIDDLTRFVGIYGAKGLAYVKVNDLGAGLEGLQSPILKFMPESTIRGILERTEAQTGDLIFFGADKARIVNESMGALRVKLGQDRGLVEKGWRPLWVTDFPMFEWDEKSGRWVALHHPFTAPKCSEEQLRQNPGRALSRAYDMVLNGTEIGGGSVRIHRTEMQQTVFDLLGIGEEEAQQKFGFLLNALRYGCPPHGGLAFGLDRLVMLMSGASSIREVMAFPKTQSAWCPLIDAPAQVNDAQLHELGIRLRKNPAVEGGTVPST.

Glu-173 is a binding site for L-aspartate. The segment at 197-200 is aspartate; that stretch reads QLYK. Residue Arg-219 participates in L-aspartate binding. ATP contacts are provided by residues 219–221 and Gln-228; that span reads RDE. His-451 provides a ligand contact to L-aspartate. Position 484 (Glu-484) interacts with ATP. Arg-491 is a binding site for L-aspartate. 536 to 539 serves as a coordination point for ATP; sequence GLDR.

It belongs to the class-II aminoacyl-tRNA synthetase family. Type 1 subfamily. As to quaternary structure, homodimer.

It is found in the cytoplasm. The catalysed reaction is tRNA(Asx) + L-aspartate + ATP = L-aspartyl-tRNA(Asx) + AMP + diphosphate. In terms of biological role, aspartyl-tRNA synthetase with relaxed tRNA specificity since it is able to aspartylate not only its cognate tRNA(Asp) but also tRNA(Asn). Reaction proceeds in two steps: L-aspartate is first activated by ATP to form Asp-AMP and then transferred to the acceptor end of tRNA(Asp/Asn). This chain is Aspartate--tRNA(Asp/Asn) ligase, found in Methylococcus capsulatus (strain ATCC 33009 / NCIMB 11132 / Bath).